The primary structure comprises 428 residues: UDP-N-acetylglucosamine 1-carboxyvinyltransferase 2 (428 aa).

Phosphoenolpyruvate is bound at residue 22–23; sequence KN. Arg-92 contributes to the UDP-N-acetyl-alpha-D-glucosamine binding site. The active-site Proton donor is Cys-116. Residue Cys-116 is modified to 2-(S-cysteinyl)pyruvic acid O-phosphothioketal. UDP-N-acetyl-alpha-D-glucosamine is bound by residues 121-125, Asp-304, and Ile-326; that span reads RPIDQ.

It belongs to the EPSP synthase family. MurA subfamily.

The protein localises to the cytoplasm. The enzyme catalyses phosphoenolpyruvate + UDP-N-acetyl-alpha-D-glucosamine = UDP-N-acetyl-3-O-(1-carboxyvinyl)-alpha-D-glucosamine + phosphate. It participates in cell wall biogenesis; peptidoglycan biosynthesis. Cell wall formation. Adds enolpyruvyl to UDP-N-acetylglucosamine. The chain is UDP-N-acetylglucosamine 1-carboxyvinyltransferase 2 from Oceanobacillus iheyensis (strain DSM 14371 / CIP 107618 / JCM 11309 / KCTC 3954 / HTE831).